A 255-amino-acid polypeptide reads, in one-letter code: Putative expansin-A27 (255 aa).

Residues 1–24 form the signal peptide; that stretch reads MGAMAENLLVLCTILAARMALAAA. The 116-residue stretch at 45–160 folds into the Expansin-like EG45 domain; the sequence is GGACGYGNLY…RRVRCWRRGG (116 aa). The Expansin-like CBD domain maps to 170–249; that stretch reads HFELVLVANV…GWKFGQTFST (80 aa).

The protein belongs to the expansin family. Expansin A subfamily.

Its subcellular location is the secreted. The protein resides in the cell wall. It localises to the membrane. May cause loosening and extension of plant cell walls by disrupting non-covalent bonding between cellulose microfibrils and matrix glucans. No enzymatic activity has been found. May be required for rapid internodal elongation in deepwater rice during submergence. The polypeptide is Putative expansin-A27 (EXPA27) (Oryza sativa subsp. japonica (Rice)).